Reading from the N-terminus, the 454-residue chain is UDP-glycosyltransferase 79A2 (454 aa).

UDP-alpha-D-glucose-binding positions include serine 269, 330–331 (WV), 348–356 (HAGYGSVIE), and 370–373 (KVDQ).

The protein belongs to the UDP-glycosyltransferase family.

In terms of biological role, may glycosylate diterpenes or flavonols in leaves. The polypeptide is UDP-glycosyltransferase 79A2 (Stevia rebaudiana (Stevia)).